The following is a 283-amino-acid chain: MEMO1 family protein MK0963 (283 aa).

The protein belongs to the MEMO1 family.

The chain is MEMO1 family protein MK0963 from Methanopyrus kandleri (strain AV19 / DSM 6324 / JCM 9639 / NBRC 100938).